The following is a 1778-amino-acid chain: Ankyrin repeat domain-containing protein 36C (1778 aa).

ANK repeat units lie at residues lysine 64–leucine 93, glutamate 97–isoleucine 126, phenylalanine 130–glutamate 159, aspartate 163–alanine 192, and leucine 196–serine 225. 5 disordered regions span residues leucine 260–lysine 365, alanine 501–serine 526, aspartate 538–serine 653, arginine 671–leucine 1027, and isoleucine 1051–serine 1072. Polar residues-rich tracts occupy residues serine 261–glutamine 272 and lysine 297–glutamine 306. Low complexity predominate over residues serine 539–leucine 555. 2 stretches are compositionally biased toward basic and acidic residues: residues proline 585 to serine 596 and proline 619 to serine 630. Composition is skewed to polar residues over residues valine 631–serine 653 and glycine 679–alanine 691. The segment covering threonine 794 to isoleucine 813 has biased composition (basic and acidic residues). Serine 829 is modified (phosphoserine). Composition is skewed to basic and acidic residues over residues arginine 840–arginine 849 and threonine 862–threonine 881. Serine 897 carries the phosphoserine modification. The span at alanine 907–arginine 917 shows a compositional bias: basic and acidic residues. The segment covering arginine 942–serine 955 has biased composition (basic residues). Composition is skewed to polar residues over residues isoleucine 983 to glutamine 992 and valine 1005 to glutamine 1026. 4 coiled-coil regions span residues glutamate 1157–serine 1187, glutamate 1247–glutamate 1333, serine 1362–glutamine 1480, and valine 1544–histidine 1768.

This sequence belongs to the ANKRD36 family.

This is Ankyrin repeat domain-containing protein 36C (ANKRD36C) from Homo sapiens (Human).